The primary structure comprises 1175 residues: Pyruvate carboxylase 1 (1175 aa).

The 451-residue stretch at 31–481 (EFNKVMVANR…DTYFIDEHPE (451 aa)) folds into the Biotin carboxylation domain. ATP-binding residues include lysine 147, glutamate 231, and histidine 266. The region spanning 151–348 (RQAAIEAGVQ…LVQAQIRIAE (198 aa)) is the ATP-grasp domain. The active site involves arginine 323. Positions 559-828 (CMITDTTFRD…DTGLSLDDIS (270 aa)) constitute a Pyruvate carboxyltransferase domain. Substrate-binding positions include 567-571 (RDAHQ) and arginine 640. Aspartate 568 is an a divalent metal cation binding site. 3 residues coordinate a divalent metal cation: lysine 737, histidine 767, and histidine 769. Lysine 737 is subject to N6-carboxylysine. Threonine 904 serves as a coordination point for substrate. Residues 1099–1174 (RALPGVRGHI…SAGDLVVEVE (76 aa)) enclose the Biotinyl-binding domain. Lysine 1140 carries the N6-biotinyllysine modification.

Interacts with sir-2.2 and sir-2.3. The cofactor is biotin. Zn(2+) serves as cofactor.

Its subcellular location is the cytoplasm. The enzyme catalyses hydrogencarbonate + pyruvate + ATP = oxaloacetate + ADP + phosphate + H(+). It participates in carbohydrate biosynthesis; gluconeogenesis. Functionally, pyruvate carboxylase catalyzes a 2-step reaction, involving the ATP-dependent carboxylation of the covalently attached biotin in the first step and the transfer of the carboxyl group to pyruvate in the second. The polypeptide is Pyruvate carboxylase 1 (Caenorhabditis elegans).